The sequence spans 211 residues: Protein-L-isoaspartate O-methyltransferase 2 (211 aa).

The active site involves Ser-60.

This sequence belongs to the methyltransferase superfamily. L-isoaspartyl/D-aspartyl protein methyltransferase family.

It localises to the cytoplasm. The enzyme catalyses [protein]-L-isoaspartate + S-adenosyl-L-methionine = [protein]-L-isoaspartate alpha-methyl ester + S-adenosyl-L-homocysteine. Its function is as follows. Catalyzes the methyl esterification of L-isoaspartyl residues in peptides and proteins that result from spontaneous decomposition of normal L-aspartyl and L-asparaginyl residues. It plays a role in the repair and/or degradation of damaged proteins. In Nitrosospira multiformis (strain ATCC 25196 / NCIMB 11849 / C 71), this protein is Protein-L-isoaspartate O-methyltransferase 2.